We begin with the raw amino-acid sequence, 255 residues long: 3-deoxy-manno-octulosonate cytidylyltransferase (255 aa).

Belongs to the KdsB family.

The protein localises to the cytoplasm. It catalyses the reaction 3-deoxy-alpha-D-manno-oct-2-ulosonate + CTP = CMP-3-deoxy-beta-D-manno-octulosonate + diphosphate. The protein operates within nucleotide-sugar biosynthesis; CMP-3-deoxy-D-manno-octulosonate biosynthesis; CMP-3-deoxy-D-manno-octulosonate from 3-deoxy-D-manno-octulosonate and CTP: step 1/1. Its pathway is bacterial outer membrane biogenesis; lipopolysaccharide biosynthesis. Activates KDO (a required 8-carbon sugar) for incorporation into bacterial lipopolysaccharide in Gram-negative bacteria. The protein is 3-deoxy-manno-octulosonate cytidylyltransferase of Pelobacter propionicus (strain DSM 2379 / NBRC 103807 / OttBd1).